The chain runs to 464 residues: Siroheme synthase (464 aa).

Residues Met-1 to Leu-203 are precorrin-2 dehydrogenase /sirohydrochlorin ferrochelatase. Residues Glu-22–Ile-23 and Pro-43–Glu-44 each bind NAD(+). At Ser-128 the chain carries Phosphoserine. The tract at residues Gly-216–Leu-464 is uroporphyrinogen-III C-methyltransferase. Pro-225 contacts S-adenosyl-L-methionine. Residue Asp-248 is the Proton acceptor of the active site. Lys-270 (proton donor) is an active-site residue. S-adenosyl-L-methionine contacts are provided by residues Gly-301–Asp-303, Ile-306, Thr-331–Ala-332, Met-383, and Gly-412.

The protein in the N-terminal section; belongs to the precorrin-2 dehydrogenase / sirohydrochlorin ferrochelatase family. In the C-terminal section; belongs to the precorrin methyltransferase family.

It catalyses the reaction uroporphyrinogen III + 2 S-adenosyl-L-methionine = precorrin-2 + 2 S-adenosyl-L-homocysteine + H(+). It carries out the reaction precorrin-2 + NAD(+) = sirohydrochlorin + NADH + 2 H(+). The enzyme catalyses siroheme + 2 H(+) = sirohydrochlorin + Fe(2+). The protein operates within cofactor biosynthesis; adenosylcobalamin biosynthesis; precorrin-2 from uroporphyrinogen III: step 1/1. It participates in cofactor biosynthesis; adenosylcobalamin biosynthesis; sirohydrochlorin from precorrin-2: step 1/1. Its pathway is porphyrin-containing compound metabolism; siroheme biosynthesis; precorrin-2 from uroporphyrinogen III: step 1/1. It functions in the pathway porphyrin-containing compound metabolism; siroheme biosynthesis; siroheme from sirohydrochlorin: step 1/1. The protein operates within porphyrin-containing compound metabolism; siroheme biosynthesis; sirohydrochlorin from precorrin-2: step 1/1. In terms of biological role, multifunctional enzyme that catalyzes the SAM-dependent methylations of uroporphyrinogen III at position C-2 and C-7 to form precorrin-2 via precorrin-1. Then it catalyzes the NAD-dependent ring dehydrogenation of precorrin-2 to yield sirohydrochlorin. Finally, it catalyzes the ferrochelation of sirohydrochlorin to yield siroheme. The polypeptide is Siroheme synthase (Pseudomonas syringae pv. tomato (strain ATCC BAA-871 / DC3000)).